The sequence spans 401 residues: Keratin-associated protein 10-4 (401 aa).

35 tandem repeats follow at residues 36 to 40 (CCEPP), 41 to 45 (CCAPS), 46 to 50 (CCAPA), 67 to 71 (CCPVT), 89 to 93 (CCQQS), 99 to 103 (CCASS), 109 to 113 (CCVPV), 114 to 118 (CCKTV), 119 to 123 (CCKPV), 124 to 128 (CCVPV), 129 to 133 (CCGDS), 135 to 139 (CCQQS), 145 to 149 (CCTSS), 155 to 159 (CCVPI), 160 to 164 (CCKPV), 172 to 176 (CCQQS), 186 to 190 (CCQAV), 208 to 212 (CCQQS), 218 to 222 (CCTSS), 228 to 232 (CCVPV), 233 to 237 (CCKTV), 238 to 242 (CCKPV), 250 to 254 (CCQQS), 270 to 274 (CCVPV), 275 to 279 (CCKPV), 280 to 284 (CCKPV), 297 to 301 (CCQQS), 307 to 311 (CCTSS), 317 to 321 (CCVPV), 322 to 326 (CCKPV), 339 to 343 (CCQQS), 349 to 353 (CCTTS), 354 to 358 (CCRPS), 373 to 377 (CCVPV), and 391 to 395 (CCRPA). Residues 36 to 395 (CCEPPCCAPS…SCQPSCCRPA (360 aa)) form a 36 X 5 AA repeats of C-C-X(3) region.

The protein belongs to the KRTAP type 10 family. As to quaternary structure, interacts with hair keratins. Restricted to hair root, not detected in any other tissues.

In the hair cortex, hair keratin intermediate filaments are embedded in an interfilamentous matrix, consisting of hair keratin-associated proteins (KRTAP), which are essential for the formation of a rigid and resistant hair shaft through their extensive disulfide bond cross-linking with abundant cysteine residues of hair keratins. The matrix proteins include the high-sulfur and high-glycine-tyrosine keratins. This chain is Keratin-associated protein 10-4 (KRTAP10-4), found in Homo sapiens (Human).